The sequence spans 186 residues: Ribosome-recycling factor (186 aa).

The protein belongs to the RRF family.

The protein localises to the cytoplasm. Responsible for the release of ribosomes from messenger RNA at the termination of protein biosynthesis. May increase the efficiency of translation by recycling ribosomes from one round of translation to another. The sequence is that of Ribosome-recycling factor from Chlorobium chlorochromatii (strain CaD3).